We begin with the raw amino-acid sequence, 169 residues long: MSNSRWDGYQQATQAPGLNRQFDTQTNVLAADSFVRSGLVGQQVNTIDPSFYDCIYGVANSANTVIERCYKDIGCCADGCCKNGYWHNRYGWAVALIVIFCILVIVAFVIWLVVWLFNRSKDKQQKRELYEHYEENNYSGLPTPQPTPTHYPAEQYSYDPARDRDNYRY.

Residues 97–117 traverse the membrane as a helical segment; that stretch reads IVIFCILVIVAFVIWLVVWLF. Residues 137–169 are disordered; sequence NYSGLPTPQPTPTHYPAEQYSYDPARDRDNYRY. Over residues 160-169 the composition is skewed to basic and acidic residues; it reads PARDRDNYRY.

Its subcellular location is the membrane. This is an uncharacterized protein from Caenorhabditis elegans.